We begin with the raw amino-acid sequence, 1317 residues long: Toxin protein Tse5 (1317 aa).

The disordered stretch occupies residues 395–419; it reads GRETRRRRDGQGRMLEEESPGKARY. Residues 403 to 415 show a composition bias toward basic and acidic residues; sequence DGQGRMLEEESPG.

Its function is as follows. Toxin secreted by the H1 type VI (H1-T6SS) secretion system that acts on bacterial target cells. The producing bacterium is protected by a cognate immunity protein. The sequence is that of Toxin protein Tse5 from Pseudomonas aeruginosa (strain ATCC 15692 / DSM 22644 / CIP 104116 / JCM 14847 / LMG 12228 / 1C / PRS 101 / PAO1).